The following is a 570-amino-acid chain: Glycine--tRNA ligase (570 aa).

Substrate contacts are provided by R99 and E165. Residues 197 to 199, 207 to 212, 324 to 325, and 443 to 446 contribute to the ATP site; these read RNE, LRLREF, EC, and GIDR. A substrate-binding site is contributed by 212–216; sequence FTQAE. 439–443 contacts substrate; the sequence is EPSFG.

The protein belongs to the class-II aminoacyl-tRNA synthetase family.

It is found in the cytoplasm. The enzyme catalyses tRNA(Gly) + glycine + ATP = glycyl-tRNA(Gly) + AMP + diphosphate. Its function is as follows. Catalyzes the attachment of glycine to tRNA(Gly). This is Glycine--tRNA ligase from Thermococcus gammatolerans (strain DSM 15229 / JCM 11827 / EJ3).